The following is a 279-amino-acid chain: MRTTISQLKEMKQNKQKIAILTAYDYPTAQILDKAGIPAILVGDSLGMVVLGYDSTVSVTMEDMLHHLKAVVRGSQKALIIADMPFMTYHLSPEQALLNAGRFIQEGGAQAVKLEGGVNVADKVKRIVDCGIPVMGHIGLTPQSVNQLSGFKVQGKTLATALSLIEDAKALEKAGAFAIVLETMPAELAAIITAGISIPTIGIGAGEECDGQVQVISDMLGMFTDFIPKHTKRYADLNGIITKAVSEYAAEVTKGAFPTLKESFTLDKKVLEELKKCVL.

Asp-44 and Asp-83 together coordinate Mg(2+). Residues 44 to 45, Asp-83, and Lys-113 contribute to the 3-methyl-2-oxobutanoate site; that span reads DS. Mg(2+) is bound at residue Glu-115. The Proton acceptor role is filled by Glu-182.

The protein belongs to the PanB family. As to quaternary structure, homodecamer; pentamer of dimers. Mg(2+) serves as cofactor.

It is found in the cytoplasm. The catalysed reaction is 3-methyl-2-oxobutanoate + (6R)-5,10-methylene-5,6,7,8-tetrahydrofolate + H2O = 2-dehydropantoate + (6S)-5,6,7,8-tetrahydrofolate. It functions in the pathway cofactor biosynthesis; (R)-pantothenate biosynthesis; (R)-pantoate from 3-methyl-2-oxobutanoate: step 1/2. In terms of biological role, catalyzes the reversible reaction in which hydroxymethyl group from 5,10-methylenetetrahydrofolate is transferred onto alpha-ketoisovalerate to form ketopantoate. This is 3-methyl-2-oxobutanoate hydroxymethyltransferase from Dehalococcoides mccartyi (strain ATCC BAA-2100 / JCM 16839 / KCTC 5957 / BAV1).